We begin with the raw amino-acid sequence, 245 residues long: Deoxyadenosine kinase (245 aa).

28-36 (GLIGAGKTT) is an ATP binding site. Residues E52, Y64, and Q75 each contribute to the substrate site. D99 functions as the Proton acceptor in the catalytic mechanism. Substrate is bound by residues R100, D105, and E165.

The protein belongs to the DCK/DGK family.

It catalyses the reaction 2'-deoxyadenosine + ATP = dAMP + ADP + H(+). In terms of biological role, specific kinase that phosphorylates deoxyadenosine but not any other deoxyribonucleoside, as part of the deoxyribonucleotide salvage pathway. The chain is Deoxyadenosine kinase (dak) from Dictyostelium discoideum (Social amoeba).